The following is a 300-amino-acid chain: Aspartate carbamoyltransferase catalytic subunit (300 aa).

Residues R54 and T55 each contribute to the carbamoyl phosphate site. Residue K82 participates in L-aspartate binding. Carbamoyl phosphate is bound by residues R104, H131, and Q134. Residues R164 and R213 each contribute to the L-aspartate site. Residues A256 and P257 each contribute to the carbamoyl phosphate site.

Belongs to the aspartate/ornithine carbamoyltransferase superfamily. ATCase family. As to quaternary structure, heterododecamer (2C3:3R2) of six catalytic PyrB chains organized as two trimers (C3), and six regulatory PyrI chains organized as three dimers (R2).

The catalysed reaction is carbamoyl phosphate + L-aspartate = N-carbamoyl-L-aspartate + phosphate + H(+). The protein operates within pyrimidine metabolism; UMP biosynthesis via de novo pathway; (S)-dihydroorotate from bicarbonate: step 2/3. Its function is as follows. Catalyzes the condensation of carbamoyl phosphate and aspartate to form carbamoyl aspartate and inorganic phosphate, the committed step in the de novo pyrimidine nucleotide biosynthesis pathway. The protein is Aspartate carbamoyltransferase catalytic subunit of Malacoplasma penetrans (strain HF-2) (Mycoplasma penetrans).